The following is a 248-amino-acid chain: 3-deoxy-manno-octulosonate cytidylyltransferase (248 aa).

This sequence belongs to the KdsB family.

The protein localises to the cytoplasm. It catalyses the reaction 3-deoxy-alpha-D-manno-oct-2-ulosonate + CTP = CMP-3-deoxy-beta-D-manno-octulosonate + diphosphate. The protein operates within nucleotide-sugar biosynthesis; CMP-3-deoxy-D-manno-octulosonate biosynthesis; CMP-3-deoxy-D-manno-octulosonate from 3-deoxy-D-manno-octulosonate and CTP: step 1/1. It participates in bacterial outer membrane biogenesis; lipopolysaccharide biosynthesis. Its function is as follows. Activates KDO (a required 8-carbon sugar) for incorporation into bacterial lipopolysaccharide in Gram-negative bacteria. The sequence is that of 3-deoxy-manno-octulosonate cytidylyltransferase from Salmonella enteritidis PT4 (strain P125109).